Here is a 39-residue protein sequence, read N- to C-terminus: Photosystem II reaction center protein L (39 aa).

A helical membrane pass occupies residues 18 to 38 (SLYLGLLFVFVTGVLMSSYFF).

This sequence belongs to the PsbL family. In terms of assembly, PSII is composed of 1 copy each of membrane proteins PsbA, PsbB, PsbC, PsbD, PsbE, PsbF, PsbH, PsbI, PsbJ, PsbK, PsbL, PsbM, PsbT, PsbX, PsbY, PsbZ, Psb30/Ycf12, peripheral proteins PsbO, CyanoQ (PsbQ), PsbU, PsbV and a large number of cofactors. It forms dimeric complexes.

It is found in the cellular thylakoid membrane. In terms of biological role, one of the components of the core complex of photosystem II (PSII). PSII is a light-driven water:plastoquinone oxidoreductase that uses light energy to abstract electrons from H(2)O, generating O(2) and a proton gradient subsequently used for ATP formation. It consists of a core antenna complex that captures photons, and an electron transfer chain that converts photonic excitation into a charge separation. This subunit is found at the monomer-monomer interface and is required for correct PSII assembly and/or dimerization. The polypeptide is Photosystem II reaction center protein L (Parasynechococcus marenigrum (strain WH8102)).